We begin with the raw amino-acid sequence, 261 residues long: HLA class II histocompatibility antigen, DQ beta 1 chain (261 aa).

The N-terminal stretch at 1–32 (MSWKKALRIPGGLRAATVTLMLAMLSTPVAEG) is a signal peptide. The segment at 33-126 (RDSPEDFVYQ…LELRTTLQRR (94 aa)) is beta-1. Topologically, residues 33 to 230 (RDSPEDFVYQ…RAQSESAQSK (198 aa)) are extracellular. Cystine bridges form between cysteine 47–cysteine 111 and cysteine 149–cysteine 205. The N-linked (GlcNAc...) asparagine glycan is linked to asparagine 51. Residues 127–220 (VEPTVTISPS…SLQNPITVEW (94 aa)) are beta-2. Residues 129–217 (PTVTISPSRT…EHPSLQNPIT (89 aa)) form the Ig-like C1-type domain. The interval 221 to 230 (RAQSESAQSK) is connecting peptide. Residues 231 to 251 (MLSGIGGFVLGLIFLGLGLII) form a helical membrane-spanning segment. Residues 252–261 (HHRSQKGLLH) are Cytoplasmic-facing.

The protein belongs to the MHC class II family. Heterodimer of an alpha and a beta subunit; also referred as MHC class II molecule. In the endoplasmic reticulum (ER) it forms a heterononamer; 3 MHC class II molecules bind to a CD74 homotrimer (also known as invariant chain or HLA class II histocompatibility antigen gamma chain). In the endosomal/lysosomal system; CD74 undergoes sequential degradation by various proteases; leaving a small fragment termed CLIP on each MHC class II molecule. MHC class II molecule interacts with HLA_DM, and HLA_DO in B-cells, in order to release CLIP and facilitate the binding of antigenic peptides.

It localises to the cell membrane. Its subcellular location is the endoplasmic reticulum membrane. The protein resides in the golgi apparatus. It is found in the trans-Golgi network membrane. The protein localises to the endosome membrane. It localises to the lysosome membrane. Its function is as follows. Binds peptides derived from antigens that access the endocytic route of antigen presenting cells (APC) and presents them on the cell surface for recognition by the CD4 T-cells. The peptide binding cleft accommodates peptides of 10-30 residues. The peptides presented by MHC class II molecules are generated mostly by degradation of proteins that access the endocytic route, where they are processed by lysosomal proteases and other hydrolases. Exogenous antigens that have been endocytosed by the APC are thus readily available for presentation via MHC II molecules, and for this reason this antigen presentation pathway is usually referred to as exogenous. As membrane proteins on their way to degradation in lysosomes as part of their normal turn-over are also contained in the endosomal/lysosomal compartments, exogenous antigens must compete with those derived from endogenous components. Autophagy is also a source of endogenous peptides, autophagosomes constitutively fuse with MHC class II loading compartments. In addition to APCs, other cells of the gastrointestinal tract, such as epithelial cells, express MHC class II molecules and CD74 and act as APCs, which is an unusual trait of the GI tract. To produce a MHC class II molecule that presents an antigen, three MHC class II molecules (heterodimers of an alpha and a beta chain) associate with a CD74 trimer in the ER to form a heterononamer. Soon after the entry of this complex into the endosomal/lysosomal system where antigen processing occurs, CD74 undergoes a sequential degradation by various proteases, including CTSS and CTSL, leaving a small fragment termed CLIP (class-II-associated invariant chain peptide). The removal of CLIP is facilitated by HLA-DM via direct binding to the alpha-beta-CLIP complex so that CLIP is released. HLA-DM stabilizes MHC class II molecules until primary high affinity antigenic peptides are bound. The MHC II molecule bound to a peptide is then transported to the cell membrane surface. In B-cells, the interaction between HLA-DM and MHC class II molecules is regulated by HLA-DO. Primary dendritic cells (DCs) also to express HLA-DO. Lysosomal microenvironment has been implicated in the regulation of antigen loading into MHC II molecules, increased acidification produces increased proteolysis and efficient peptide loading. The polypeptide is HLA class II histocompatibility antigen, DQ beta 1 chain (HLA-DQB1) (Homo sapiens (Human)).